We begin with the raw amino-acid sequence, 488 residues long: 3-octaprenyl-4-hydroxybenzoate carboxy-lyase (488 aa).

Asparagine 172 lines the Mn(2+) pocket. Prenylated FMN-binding positions include 175–177, 189–191, and 194–195; these read IYR, RWL, and RG. A Mn(2+)-binding site is contributed by glutamate 238. Aspartate 287 serves as the catalytic Proton donor.

It belongs to the UbiD family. In terms of assembly, homohexamer. The cofactor is prenylated FMN. It depends on Mn(2+) as a cofactor.

The protein localises to the cell membrane. It carries out the reaction a 4-hydroxy-3-(all-trans-polyprenyl)benzoate + H(+) = a 2-(all-trans-polyprenyl)phenol + CO2. It functions in the pathway cofactor biosynthesis; ubiquinone biosynthesis. In terms of biological role, catalyzes the decarboxylation of 3-octaprenyl-4-hydroxy benzoate to 2-octaprenylphenol, an intermediate step in ubiquinone biosynthesis. The protein is 3-octaprenyl-4-hydroxybenzoate carboxy-lyase of Alkalilimnicola ehrlichii (strain ATCC BAA-1101 / DSM 17681 / MLHE-1).